The primary structure comprises 346 residues: Biotin synthase (346 aa).

The region spanning 38–256 (QQVQVSTLLS…IAVARIMMPT (219 aa)) is the Radical SAM core domain. Positions 53, 57, and 60 each coordinate [4Fe-4S] cluster. [2Fe-2S] cluster contacts are provided by Cys97, Cys128, Cys188, and Arg260.

Belongs to the radical SAM superfamily. Biotin synthase family. As to quaternary structure, homodimer. [4Fe-4S] cluster serves as cofactor. Requires [2Fe-2S] cluster as cofactor.

It catalyses the reaction (4R,5S)-dethiobiotin + (sulfur carrier)-SH + 2 reduced [2Fe-2S]-[ferredoxin] + 2 S-adenosyl-L-methionine = (sulfur carrier)-H + biotin + 2 5'-deoxyadenosine + 2 L-methionine + 2 oxidized [2Fe-2S]-[ferredoxin]. Its pathway is cofactor biosynthesis; biotin biosynthesis; biotin from 7,8-diaminononanoate: step 2/2. In terms of biological role, catalyzes the conversion of dethiobiotin (DTB) to biotin by the insertion of a sulfur atom into dethiobiotin via a radical-based mechanism. The sequence is that of Biotin synthase from Salmonella agona (strain SL483).